We begin with the raw amino-acid sequence, 189 residues long: UPF0301 protein CCA_00630 (189 aa).

The protein belongs to the UPF0301 (AlgH) family.

The sequence is that of UPF0301 protein CCA_00630 from Chlamydia caviae (strain ATCC VR-813 / DSM 19441 / 03DC25 / GPIC) (Chlamydophila caviae).